We begin with the raw amino-acid sequence, 81 residues long: Acyl carrier protein 2 (81 aa).

The 79-residue stretch at 1-79 (MTETEILERI…DVIGAVQSLL (79 aa)) folds into the Carrier domain. Serine 39 carries the post-translational modification O-(pantetheine 4'-phosphoryl)serine.

This sequence belongs to the acyl carrier protein (ACP) family. In terms of processing, 4'-phosphopantetheine is transferred from CoA to a specific serine of apo-ACP by AcpS. This modification is essential for activity because fatty acids are bound in thioester linkage to the sulfhydryl of the prosthetic group.

It localises to the cytoplasm. It participates in lipid metabolism; fatty acid biosynthesis. Functionally, carrier of the growing fatty acid chain in fatty acid biosynthesis. This is Acyl carrier protein 2 from Ralstonia nicotianae (strain ATCC BAA-1114 / GMI1000) (Ralstonia solanacearum).